A 325-amino-acid polypeptide reads, in one-letter code: DNA-directed RNA polymerase subunit alpha (325 aa).

Positions 1-238 (MSLKSLLKGF…EHLTVFINFE (238 aa)) are alpha N-terminal domain (alpha-NTD). The segment at 254–325 (KLKASLSKHV…LGLSFGMRDF (72 aa)) is alpha C-terminal domain (alpha-CTD).

This sequence belongs to the RNA polymerase alpha chain family. In terms of assembly, homodimer. The RNAP catalytic core consists of 2 alpha, 1 beta, 1 beta' and 1 omega subunit. When a sigma factor is associated with the core the holoenzyme is formed, which can initiate transcription.

It catalyses the reaction RNA(n) + a ribonucleoside 5'-triphosphate = RNA(n+1) + diphosphate. Its function is as follows. DNA-dependent RNA polymerase catalyzes the transcription of DNA into RNA using the four ribonucleoside triphosphates as substrates. In Leptospira borgpetersenii serovar Hardjo-bovis (strain JB197), this protein is DNA-directed RNA polymerase subunit alpha.